The chain runs to 85 residues: MVCDPNGDDTGRTHATVPVSQLGYEACRDELMEVVRLLEQGGLDLDASLRLWERGEQLAKRCEEHLAGARQRVSDVLAGDEAQNG.

This sequence belongs to the XseB family. Heterooligomer composed of large and small subunits.

Its subcellular location is the cytoplasm. The catalysed reaction is Exonucleolytic cleavage in either 5'- to 3'- or 3'- to 5'-direction to yield nucleoside 5'-phosphates.. Functionally, bidirectionally degrades single-stranded DNA into large acid-insoluble oligonucleotides, which are then degraded further into small acid-soluble oligonucleotides. This Mycobacterium bovis (strain ATCC BAA-935 / AF2122/97) protein is Exodeoxyribonuclease 7 small subunit.